The following is a 360-amino-acid chain: DNA replication and repair protein RecF (360 aa).

ATP is bound at residue 30-37 (GANGSGKT).

It belongs to the RecF family.

It is found in the cytoplasm. Functionally, the RecF protein is involved in DNA metabolism; it is required for DNA replication and normal SOS inducibility. RecF binds preferentially to single-stranded, linear DNA. It also seems to bind ATP. This Acinetobacter baumannii (strain SDF) protein is DNA replication and repair protein RecF.